The chain runs to 152 residues: Large ribosomal subunit protein uL15 (152 aa).

The interval 1–57 is disordered; sequence MTSTLNTLKSNSGSRKKKLRKGRGIAAGQGASCGFGMRGQKSRSGRPTRPGFEGGQM. Residues 14-23 show a composition bias toward basic residues; the sequence is SRKKKLRKGR. Gly residues predominate over residues 25 to 37; it reads IAAGQGASCGFGM.

It belongs to the universal ribosomal protein uL15 family. As to quaternary structure, part of the 50S ribosomal subunit.

Binds to the 23S rRNA. The chain is Large ribosomal subunit protein uL15 from Prochlorococcus marinus (strain MIT 9312).